The primary structure comprises 302 residues: Acetylglutamate kinase (302 aa).

Substrate-binding positions include 75–76, Arg-97, and Asn-198; that span reads GG.

The protein belongs to the acetylglutamate kinase family. ArgB subfamily.

It localises to the cytoplasm. It catalyses the reaction N-acetyl-L-glutamate + ATP = N-acetyl-L-glutamyl 5-phosphate + ADP. Its pathway is amino-acid biosynthesis; L-arginine biosynthesis; N(2)-acetyl-L-ornithine from L-glutamate: step 2/4. Functionally, catalyzes the ATP-dependent phosphorylation of N-acetyl-L-glutamate. In Leifsonia xyli subsp. xyli (strain CTCB07), this protein is Acetylglutamate kinase.